Consider the following 280-residue polypeptide: Energy-coupling factor transporter ATP-binding protein EcfA2 (280 aa).

The 243-residue stretch at isoleucine 3–glycine 245 folds into the ABC transporter domain. Glycine 40–serine 47 lines the ATP pocket.

It belongs to the ABC transporter superfamily. Energy-coupling factor EcfA family. In terms of assembly, forms a stable energy-coupling factor (ECF) transporter complex composed of 2 membrane-embedded substrate-binding proteins (S component), 2 ATP-binding proteins (A component) and 2 transmembrane proteins (T component).

The protein localises to the cell membrane. Its function is as follows. ATP-binding (A) component of a common energy-coupling factor (ECF) ABC-transporter complex. Unlike classic ABC transporters this ECF transporter provides the energy necessary to transport a number of different substrates. The chain is Energy-coupling factor transporter ATP-binding protein EcfA2 from Streptococcus thermophilus (strain CNRZ 1066).